The chain runs to 185 residues: Ribosome maturation factor RimM (185 aa).

The region spanning 106–185 (SGEYYWKDLL…IIEVDWDPGF (80 aa)) is the PRC barrel domain.

The protein belongs to the RimM family. Binds ribosomal protein uS19.

It is found in the cytoplasm. Functionally, an accessory protein needed during the final step in the assembly of 30S ribosomal subunit, possibly for assembly of the head region. Essential for efficient processing of 16S rRNA. May be needed both before and after RbfA during the maturation of 16S rRNA. It has affinity for free ribosomal 30S subunits but not for 70S ribosomes. The protein is Ribosome maturation factor RimM of Sodalis glossinidius (strain morsitans).